A 132-amino-acid chain; its full sequence is Small ribosomal subunit protein uS8 (132 aa).

The protein belongs to the universal ribosomal protein uS8 family. As to quaternary structure, part of the 30S ribosomal subunit. Contacts proteins S5 and S12.

One of the primary rRNA binding proteins, it binds directly to 16S rRNA central domain where it helps coordinate assembly of the platform of the 30S subunit. This is Small ribosomal subunit protein uS8 from Bartonella tribocorum (strain CIP 105476 / IBS 506).